The sequence spans 147 residues: Lysozyme C (147 aa).

An N-terminal signal peptide occupies residues 1–18; sequence MRSLLILVLCFLPLAALG. Positions 19-147 constitute a C-type lysozyme domain; it reads KVFGRCELAA…VQAWIRGCRL (129 aa). Cystine bridges form between Cys24-Cys145, Cys48-Cys133, Cys82-Cys98, and Cys94-Cys112. Active-site residues include Glu53 and Asp70. Residue Asp119 coordinates substrate.

It belongs to the glycosyl hydrolase 22 family. As to quaternary structure, monomer. In the egg white and polymorphonuclear leukocytes.

Its subcellular location is the secreted. The catalysed reaction is Hydrolysis of (1-&gt;4)-beta-linkages between N-acetylmuramic acid and N-acetyl-D-glucosamine residues in a peptidoglycan and between N-acetyl-D-glucosamine residues in chitodextrins.. In terms of biological role, lysozymes have primarily a bacteriolytic function; those in tissues and body fluids are associated with the monocyte-macrophage system and enhance the activity of immunoagents. Has bacteriolytic activity against M.luteus. The polypeptide is Lysozyme C (LYZ) (Gallus gallus (Chicken)).